The sequence spans 390 residues: 8-amino-7-oxononanoate synthase (390 aa).

Arginine 20 contacts substrate. Position 107–108 (107–108 (GF)) interacts with pyridoxal 5'-phosphate. Residue histidine 132 coordinates substrate. Pyridoxal 5'-phosphate contacts are provided by residues serine 179, 204-207 (DDAH), and 235-238 (TLSK). An N6-(pyridoxal phosphate)lysine modification is found at lysine 238. Position 352 (threonine 352) interacts with substrate.

Belongs to the class-II pyridoxal-phosphate-dependent aminotransferase family. BioF subfamily. As to quaternary structure, homodimer. Pyridoxal 5'-phosphate serves as cofactor.

The enzyme catalyses 6-carboxyhexanoyl-[ACP] + L-alanine + H(+) = (8S)-8-amino-7-oxononanoate + holo-[ACP] + CO2. The protein operates within cofactor biosynthesis; biotin biosynthesis. Its function is as follows. Catalyzes the decarboxylative condensation of pimeloyl-[acyl-carrier protein] and L-alanine to produce 8-amino-7-oxononanoate (AON), [acyl-carrier protein], and carbon dioxide. This Exiguobacterium sibiricum (strain DSM 17290 / CCUG 55495 / CIP 109462 / JCM 13490 / 255-15) protein is 8-amino-7-oxononanoate synthase.